Here is a 403-residue protein sequence, read N- to C-terminus: Argininosuccinate synthase (403 aa).

10 to 18 is a binding site for ATP; the sequence is AYSGGLDTS. Tyr-87 is an L-citrulline binding site. Gly-117 is a binding site for ATP. The L-aspartate site is built by Thr-119, Asn-123, and Asp-124. Asn-123 is an L-citrulline binding site. Residues Arg-127, Ser-175, Glu-260, and Tyr-272 each contribute to the L-citrulline site.

It belongs to the argininosuccinate synthase family. Type 1 subfamily. Homotetramer.

It localises to the cytoplasm. It catalyses the reaction L-citrulline + L-aspartate + ATP = 2-(N(omega)-L-arginino)succinate + AMP + diphosphate + H(+). Its pathway is amino-acid biosynthesis; L-arginine biosynthesis; L-arginine from L-ornithine and carbamoyl phosphate: step 2/3. In Bacillus velezensis (strain DSM 23117 / BGSC 10A6 / LMG 26770 / FZB42) (Bacillus amyloliquefaciens subsp. plantarum), this protein is Argininosuccinate synthase.